Consider the following 388-residue polypeptide: Succinate--CoA ligase [ADP-forming] subunit beta (388 aa).

Residues 9-244 form the ATP-grasp domain; it reads KEILRKYNVP…LDEEDPAEIE (236 aa). Residues Lys-46, 53–55, Glu-99, Ala-102, and Glu-107 each bind ATP; that span reads GRG. Mg(2+)-binding residues include Asn-199 and Asp-213. Residues Asn-264 and 321–323 contribute to the substrate site; that span reads GIM.

Belongs to the succinate/malate CoA ligase beta subunit family. As to quaternary structure, heterotetramer of two alpha and two beta subunits. It depends on Mg(2+) as a cofactor.

The catalysed reaction is succinate + ATP + CoA = succinyl-CoA + ADP + phosphate. It catalyses the reaction GTP + succinate + CoA = succinyl-CoA + GDP + phosphate. The protein operates within carbohydrate metabolism; tricarboxylic acid cycle; succinate from succinyl-CoA (ligase route): step 1/1. Its function is as follows. Succinyl-CoA synthetase functions in the citric acid cycle (TCA), coupling the hydrolysis of succinyl-CoA to the synthesis of either ATP or GTP and thus represents the only step of substrate-level phosphorylation in the TCA. The beta subunit provides nucleotide specificity of the enzyme and binds the substrate succinate, while the binding sites for coenzyme A and phosphate are found in the alpha subunit. This Ralstonia pickettii (strain 12J) protein is Succinate--CoA ligase [ADP-forming] subunit beta.